The following is a 111-amino-acid chain: MIGVVLVLASLLSVGGQLCQKQATRPLTTGGRRRHLMLWLGLALICMGAAMVLWLLVLQTLPVGIAYPMLSLNFVWVTLAAWKIWHEQVPPRHWLGVALIISGIIILGSAA.

3 helical membrane-spanning segments follow: residues 38 to 58 (LWLG…LLVL), 61 to 81 (LPVG…TLAA), and 91 to 111 (PRHW…GSAA). An EamA domain is found at 40–109 (LGLALICMGA…IISGIIILGS (70 aa)).

Belongs to the ArnE family. In terms of assembly, heterodimer of ArnE and ArnF.

It is found in the cell inner membrane. The protein operates within bacterial outer membrane biogenesis; lipopolysaccharide biosynthesis. Translocates 4-amino-4-deoxy-L-arabinose-phosphoundecaprenol (alpha-L-Ara4N-phosphoundecaprenol) from the cytoplasmic to the periplasmic side of the inner membrane. This is Probable 4-amino-4-deoxy-L-arabinose-phosphoundecaprenol flippase subunit ArnE from Salmonella paratyphi B (strain ATCC BAA-1250 / SPB7).